Reading from the N-terminus, the 61-residue chain is Small ribosomal subunit protein uS14 (61 aa).

Zn(2+) is bound by residues C24, C27, C40, and C43.

It belongs to the universal ribosomal protein uS14 family. Zinc-binding uS14 subfamily. Part of the 30S ribosomal subunit. Contacts proteins S3 and S10. The cofactor is Zn(2+).

Binds 16S rRNA, required for the assembly of 30S particles and may also be responsible for determining the conformation of the 16S rRNA at the A site. This chain is Small ribosomal subunit protein uS14, found in Clostridium acetobutylicum (strain ATCC 824 / DSM 792 / JCM 1419 / IAM 19013 / LMG 5710 / NBRC 13948 / NRRL B-527 / VKM B-1787 / 2291 / W).